Here is a 439-residue protein sequence, read N- to C-terminus: Protein pop-1 (439 aa).

Residues 1–38 (MMADEELGDEVKVFRRDEDADDDPMISGETSEQQLADD) form a disordered region. Over residues 9-18 (DEVKVFRRDE) the composition is skewed to basic and acidic residues. Residues 87–138 (SGLPIMFPMVVPQYLSPNPNINMMNMMTMRAAMAGAPLSPAFPAMFSPNPLF) are involved in nuclear asymmetry. Residue S125 is modified to Phosphoserine; by LIT1. A DNA-binding region (HMG box) is located at residues 199-269 (IKKPLNAFMW…SHKEKYPQWS (71 aa)). The span at 254 to 265 (AKKDRESHKEKY) shows a compositional bias: basic and acidic residues. Disordered stretches follow at residues 254-298 (AKKD…NNDQ), 329-365 (RSGS…MPMN), and 385-439 (SAHL…VCTL). Over residues 277–286 (NKKKPKRKRD) the composition is skewed to basic residues. Low complexity-rich tracts occupy residues 346-365 (GCSS…MPMN) and 385-400 (SAHL…SGTS). Over residues 409–420 (SESDVDEDEDID) the composition is skewed to acidic residues. The span at 422–439 (TITQQTQEYIMQESVCTL) shows a compositional bias: polar residues.

It belongs to the TCF/LEF family. As to quaternary structure, interacts with hda-1. Interacts with bar-1. Interacts with par-5; the interaction is direct and is enhanced by lit-1-mediated pop-1 phosphorylation. The interaction also leads to the subsequent nuclear export of pop-1. Interacts (when phosphorylated on Ser-125) with lit-1; the interaction is dependent on the beta-catenin-lit-1 complex. Interacts with wrm-1. In terms of processing, phosphorylated on Ser-125 by lit-1 in the beta-catenin-lit-1 complex. Phosphorylation promotes the interaction of pop-1 and par-5 and the subsequent translocation of pop-1 from the nucleus to the cytoplasm.

It localises to the nucleus. The protein resides in the cytoplasm. Part of the Wnt signaling pathway essential for the specification of the mesodermal cell fate in early embryos. Required for asymmetrical division of somatic gonadal precursor descendants which initiate axis formation required to control organ shape. Similarly, involved in asymmetrical division of seam cells, a stem cell-like lineage. Represses expression of target genes via its interaction with hda-1 histone deacetylase. Required for specification of the M lineage-derived coelomocyte and sex myoblast fate. Regulates coelomocyte fate by positively regulating proliferation and ceh-34 and possibly eya-1 expression in M.dlpa and M.drpa precursors. This is Protein pop-1 from Caenorhabditis briggsae.